The primary structure comprises 56 residues: Cytochrome b-c1 complex subunit 10 (56 aa).

Residues 1–16 (MLSRFLGPRYRELARN) lie on the Mitochondrial matrix side of the membrane. Residues 17-38 (WIPTAGMWGTVGAVGLVWATDW) form a helical membrane-spanning segment. Over 39–56 (RLILDWVPYINGKFKKDD) the chain is Mitochondrial intermembrane.

This sequence belongs to the UQCR11/QCR10 family. Component of the ubiquinol-cytochrome c oxidoreductase (cytochrome b-c1 complex, complex III, CIII), a multisubunit enzyme composed of 11 subunits. The complex is composed of 3 respiratory subunits cytochrome b, cytochrome c1 and Rieske protein UQCRFS1, 2 core protein subunits UQCRC1/QCR1 and UQCRC2/QCR2, and 6 low-molecular weight protein subunits UQCRH/QCR6, UQCRB/QCR7, UQCRQ/QCR8, UQCR10/QCR9, UQCR11/QCR10 and subunit 9, the cleavage product of Rieske protein UQCRFS1. The complex exists as an obligatory dimer and forms supercomplexes (SCs) in the inner mitochondrial membrane with NADH-ubiquinone oxidoreductase (complex I, CI) and cytochrome c oxidase (complex IV, CIV), resulting in different assemblies (supercomplex SCI(1)III(2)IV(1) and megacomplex MCI(2)III(2)IV(2)).

Its subcellular location is the mitochondrion inner membrane. Its function is as follows. Component of the ubiquinol-cytochrome c oxidoreductase, a multisubunit transmembrane complex that is part of the mitochondrial electron transport chain which drives oxidative phosphorylation. The respiratory chain contains 3 multisubunit complexes succinate dehydrogenase (complex II, CII), ubiquinol-cytochrome c oxidoreductase (cytochrome b-c1 complex, complex III, CIII) and cytochrome c oxidase (complex IV, CIV), that cooperate to transfer electrons derived from NADH and succinate to molecular oxygen, creating an electrochemical gradient over the inner membrane that drives transmembrane transport and the ATP synthase. The cytochrome b-c1 complex catalyzes electron transfer from ubiquinol to cytochrome c, linking this redox reaction to translocation of protons across the mitochondrial inner membrane, with protons being carried across the membrane as hydrogens on the quinol. In the process called Q cycle, 2 protons are consumed from the matrix, 4 protons are released into the intermembrane space and 2 electrons are passed to cytochrome c. QCR10 has a role in CIII assembly and RIP1 stability. The chain is Cytochrome b-c1 complex subunit 10 (Uqcr11) from Mus musculus (Mouse).